The chain runs to 1875 residues: Nonribosomal peptide synthetase otaB (1875 aa).

Residues 202-590 form an adenylation 1 region; sequence GQVRENGDRA…SIRFAGRRQA (389 aa). One can recognise a Carrier domain in the interval 724 to 800; sequence SPMTAAERVM…DLVAHIKDAG (77 aa). Residue Ser-761 is modified to O-(pantetheine 4'-phosphoryl)serine. The condensation stretch occupies residues 836–1245; it reads EDVYPCTTLQ…LVSPLDEERL (410 aa). Residues 1264-1659 are adenylation 2; that stretch reads QKQSYAQPQA…ARKDTQVKIR (396 aa).

The protein belongs to the NRP synthetase family.

It carries out the reaction 7-carboxymellein + L-phenylalanine + ATP = ochratoxin B + ADP + phosphate + H(+). It functions in the pathway mycotoxin biosynthesis. In terms of biological role, nonribosomal peptide synthetase; part of the gene cluster that mediates the biosynthesis of ochratoxin A (OTA), a mycotoxin composed of a chlorinated type I polyketide dihydroisocoumarin moiety linked to L-phenylalanine, and demonstrated to have nephrotoxic, immunotoxic, genotoxic, neurotoxic, and teratogenic properties. OtaB is responsible for the linking of phenylalanine to the dihydroisocoumarin ring. The pathway begins with the highly reducing polyketide synthase otaA that catalyzes the formation of the isocoumarin group during the initial stages of biosynthesis, starting from one acetate and 4 malonate units, to originate the characteristic pentaketide skeleton 7-methylmellein (7-MM) of the OTA molecule. The newly identified cyclase otaY might be involved in the polyketide cyclization reaction during the initial steps of the OTA biosynthesis. 7-MM is then oxidized into 7-carboxymellein (also called ochratoxin beta) by the cytochrome P450 monooxygenase otaC. The NRPS encoded by the otaB gene is involved in the linking of phenylalanine to the dihydroisocoumarin ring. The reaction catalyzed by NRPS results in the production of ochratoxin B (OTB), which is the non-chlorinated analog of OTA and which subsequently serves as the substrate of the halogenase otaD for chlorination activity to form the final molecular structure of OTA, containing a chlorine atom in the C-5 position of the molecule. In Aspergillus carbonarius (strain ITEM 5010), this protein is Nonribosomal peptide synthetase otaB.